The primary structure comprises 215 residues: Cytochrome b6 (215 aa).

Residues 32–52 form a helical membrane-spanning segment; that stretch reads IFYCLGGITLTCFLVQVATGF. Cys-35 is a heme c binding site. 2 residues coordinate heme b: His-86 and His-100. 3 consecutive transmembrane segments (helical) span residues 90–110, 116–136, and 186–206; these read ASMM…TGGF, LTWV…VTGY, and LHTF…FLMI. Heme b is bound by residues His-187 and His-202.

Belongs to the cytochrome b family. PetB subfamily. In terms of assembly, the 4 large subunits of the cytochrome b6-f complex are cytochrome b6, subunit IV (17 kDa polypeptide, PetD), cytochrome f and the Rieske protein, while the 4 small subunits are PetG, PetL, PetM and PetN. The complex functions as a dimer. Heme b serves as cofactor. Heme c is required as a cofactor.

The protein resides in the plastid. It localises to the chloroplast thylakoid membrane. Component of the cytochrome b6-f complex, which mediates electron transfer between photosystem II (PSII) and photosystem I (PSI), cyclic electron flow around PSI, and state transitions. The polypeptide is Cytochrome b6 (Pelargonium hortorum (Common geranium)).